The sequence spans 185 residues: Pyruvate/ketoisovalerate oxidoreductases common subunit gamma (185 aa).

In terms of assembly, heterotetramer of one alpha, one beta, one delta and one gamma chain.

It catalyses the reaction 2 oxidized [2Fe-2S]-[ferredoxin] + pyruvate + CoA = 2 reduced [2Fe-2S]-[ferredoxin] + acetyl-CoA + CO2 + H(+). The catalysed reaction is 3-methyl-2-oxobutanoate + 2 oxidized [2Fe-2S]-[ferredoxin] + CoA = 2-methylpropanoyl-CoA + 2 reduced [2Fe-2S]-[ferredoxin] + CO2 + H(+). This chain is Pyruvate/ketoisovalerate oxidoreductases common subunit gamma (porG), found in Thermococcus kodakarensis (strain ATCC BAA-918 / JCM 12380 / KOD1) (Pyrococcus kodakaraensis (strain KOD1)).